The sequence spans 178 residues: Large ribosomal subunit protein uL6 (178 aa).

It belongs to the universal ribosomal protein uL6 family. Part of the 50S ribosomal subunit.

Its function is as follows. This protein binds to the 23S rRNA, and is important in its secondary structure. It is located near the subunit interface in the base of the L7/L12 stalk, and near the tRNA binding site of the peptidyltransferase center. The sequence is that of Large ribosomal subunit protein uL6 from Tropheryma whipplei (strain TW08/27) (Whipple's bacillus).